Consider the following 111-residue polypeptide: Rubredoxin (111 aa).

The 52-residue stretch at 11 to 62 (LDRFECRSCGYVYEPEKGDNKHDIAPETPFAELPINWRCPVCTAKKAAFTNI) folds into the Rubredoxin-like domain. Residues C16, C19, C49, and C52 each coordinate Fe cation.

Belongs to the rubredoxin family. Fe(3+) serves as cofactor.

Its function is as follows. Rubredoxin is a small nonheme, iron protein lacking acid-labile sulfide. Its single Fe, chelated to 4 Cys, functions as an electron acceptor and may also stabilize the conformation of the molecule. Could be involved in hydrogenase-linked redox processes. This is Rubredoxin (rub) from Nostoc sp. (strain PCC 7120 / SAG 25.82 / UTEX 2576).